The sequence spans 395 residues: Acid ceramidase (395 aa).

An N-terminal signal peptide occupies residues methionine 1 to alanine 21. Cysteines 31 and 340 form a disulfide. Cysteine 143 serves as the catalytic Nucleophile. N-linked (GlcNAc...) asparagine glycans are attached at residues asparagine 173, asparagine 259, asparagine 286, and asparagine 348. An intrachain disulfide couples cysteine 388 to cysteine 392.

This sequence belongs to the acid ceramidase family. In terms of assembly, heterodimer; disulfide-linked. The heterodimer is composed of the disulfide-linked alpha and beta chains produced by autocatalytic cleavage of the precursor. N-glycosylated. In terms of processing, proteolytically cleaved into two chains alpha and beta that remain associated via a disulfide bond. Cleavage gives rise to a conformation change that activates the enzyme. The same catalytic Cys residue mediates the autoproteolytic cleavage and subsequent hydrolysis of lipid substrates. The beta chain may undergo an additional C-terminal processing.

It localises to the lysosome. It is found in the secreted. The enzyme catalyses an N-acylsphing-4-enine + H2O = sphing-4-enine + a fatty acid. The catalysed reaction is N-dodecanoylsphing-4-enine + H2O = dodecanoate + sphing-4-enine. It catalyses the reaction N-tetradecanoylsphing-4-enine + H2O = tetradecanoate + sphing-4-enine. It carries out the reaction N-hexadecanoylsphing-4-enine + H2O = sphing-4-enine + hexadecanoate. The enzyme catalyses N-octadecanoylsphing-4-enine + H2O = sphing-4-enine + octadecanoate. The catalysed reaction is N-dodecanoyl-(4R)-hydroxysphinganine + H2O = (4R)-hydroxysphinganine + dodecanoate. It catalyses the reaction N-(dodecanoyl)-sphinganine + H2O = dodecanoate + sphinganine. It carries out the reaction N-(acetyl)-sphing-4-enine + H2O = sphing-4-enine + acetate. The enzyme catalyses N-(hexanoyl)sphing-4-enine + H2O = hexanoate + sphing-4-enine. The catalysed reaction is N-octanoylsphing-4-enine + H2O = octanoate + sphing-4-enine. It catalyses the reaction N-(9Z-octadecenoyl)-sphing-4-enine + H2O = sphing-4-enine + (9Z)-octadecenoate. It carries out the reaction N-dodecanoylethanolamine + H2O = dodecanoate + ethanolamine. It functions in the pathway lipid metabolism; sphingolipid metabolism. Functionally, lysosomal ceramidase that hydrolyzes sphingolipid ceramides into sphingosine and free fatty acids at acidic pH. Ceramides, sphingosine, and its phosphorylated form sphingosine-1-phosphate are bioactive lipids that mediate cellular signaling pathways regulating several biological processes including cell proliferation, apoptosis and differentiation. Has a higher catalytic efficiency towards C12-ceramides versus other ceramides. Also catalyzes the reverse reaction allowing the synthesis of ceramides from fatty acids and sphingosine. For the reverse synthetic reaction, the natural sphingosine D-erythro isomer is more efficiently utilized as a substrate compared to D-erythro-dihydrosphingosine and D-erythro-phytosphingosine, while the fatty acids with chain lengths of 12 or 14 carbons are the most efficiently used. Also has an N-acylethanolamine hydrolase activity. By regulating the levels of ceramides, sphingosine and sphingosine-1-phosphate in the epidermis, mediates the calcium-induced differentiation of epidermal keratinocytes. Also indirectly regulates tumor necrosis factor/TNF-induced apoptosis. By regulating the intracellular balance between ceramides and sphingosine, in adrenocortical cells, probably also acts as a regulator of steroidogenesis. The polypeptide is Acid ceramidase (Heterocephalus glaber (Naked mole rat)).